The following is a 61-amino-acid chain: Large ribosomal subunit protein uL30 (61 aa).

This sequence belongs to the universal ribosomal protein uL30 family. In terms of assembly, part of the 50S ribosomal subunit.

The sequence is that of Large ribosomal subunit protein uL30 from Chlorobium phaeovibrioides (strain DSM 265 / 1930) (Prosthecochloris vibrioformis (strain DSM 265)).